We begin with the raw amino-acid sequence, 226 residues long: Apoptosis regulator OPG045 (226 aa).

This sequence belongs to the orthopoxvirus OPG045 family. In terms of assembly, homodimer. Interacts with host pro-apoptotic protein BCL2L11 (via BH3 domain). Interacts with host NLRP1. Interacts with host BAK.

The protein resides in the host mitochondrion outer membrane. The protein localises to the host cytoplasm. In terms of biological role, plays a role in evading host innate immune response by inhibiting host inflammasome activation. Interacts with and inhibits NLR-mediated interleukin-1 beta/IL1B production in infected cells. At the host mitochondria outer membrane, interacts with the BH3 domain of host BAK and prevents BAK from binding active BAX. In turn, host apoptosis is inhibited. This chain is Apoptosis regulator OPG045 (OPG045), found in Homo sapiens (Human).